A 235-amino-acid chain; its full sequence is Large ribosomal subunit protein uL1 (235 aa).

Belongs to the universal ribosomal protein uL1 family. Part of the 50S ribosomal subunit.

Binds directly to 23S rRNA. The L1 stalk is quite mobile in the ribosome, and is involved in E site tRNA release. In terms of biological role, protein L1 is also a translational repressor protein, it controls the translation of the L11 operon by binding to its mRNA. This chain is Large ribosomal subunit protein uL1, found in Symbiobacterium thermophilum (strain DSM 24528 / JCM 14929 / IAM 14863 / T).